A 204-amino-acid chain; its full sequence is Leucyl/phenylalanyl-tRNA--protein transferase (204 aa).

The protein belongs to the L/F-transferase family.

It localises to the cytoplasm. The catalysed reaction is N-terminal L-lysyl-[protein] + L-leucyl-tRNA(Leu) = N-terminal L-leucyl-L-lysyl-[protein] + tRNA(Leu) + H(+). It carries out the reaction N-terminal L-arginyl-[protein] + L-leucyl-tRNA(Leu) = N-terminal L-leucyl-L-arginyl-[protein] + tRNA(Leu) + H(+). The enzyme catalyses L-phenylalanyl-tRNA(Phe) + an N-terminal L-alpha-aminoacyl-[protein] = an N-terminal L-phenylalanyl-L-alpha-aminoacyl-[protein] + tRNA(Phe). Its function is as follows. Functions in the N-end rule pathway of protein degradation where it conjugates Leu, Phe and, less efficiently, Met from aminoacyl-tRNAs to the N-termini of proteins containing an N-terminal arginine or lysine. In Rhizobium meliloti (strain 1021) (Ensifer meliloti), this protein is Leucyl/phenylalanyl-tRNA--protein transferase.